The sequence spans 78 residues: DNA-directed RNA polymerase subunit Rpo5 (78 aa).

This sequence belongs to the archaeal Rpo5/eukaryotic RPB5 RNA polymerase subunit family. As to quaternary structure, part of the RNA polymerase complex.

Its subcellular location is the cytoplasm. It catalyses the reaction RNA(n) + a ribonucleoside 5'-triphosphate = RNA(n+1) + diphosphate. Functionally, DNA-dependent RNA polymerase (RNAP) catalyzes the transcription of DNA into RNA using the four ribonucleoside triphosphates as substrates. The sequence is that of DNA-directed RNA polymerase subunit Rpo5 from Methanothrix thermoacetophila (strain DSM 6194 / JCM 14653 / NBRC 101360 / PT) (Methanosaeta thermophila).